Consider the following 871-residue polypeptide: Protein translocase subunit SecA (871 aa).

Residues Gln80, 98 to 102 (GEGKT), and Asp537 contribute to the ATP site.

It belongs to the SecA family. Monomer and homodimer. Part of the essential Sec protein translocation apparatus which comprises SecA, SecYEG and auxiliary proteins SecDF. Other proteins may also be involved.

It localises to the cell inner membrane. It is found in the cytoplasm. It catalyses the reaction ATP + H2O + cellular proteinSide 1 = ADP + phosphate + cellular proteinSide 2.. Functionally, part of the Sec protein translocase complex. Interacts with the SecYEG preprotein conducting channel. Has a central role in coupling the hydrolysis of ATP to the transfer of proteins into and across the cell membrane, serving as an ATP-driven molecular motor driving the stepwise translocation of polypeptide chains across the membrane. In Thermotoga sp. (strain RQ2), this protein is Protein translocase subunit SecA.